The following is a 502-amino-acid chain: Glycerol kinase (502 aa).

Residue Thr13 participates in ADP binding. The ATP site is built by Thr13, Thr14, and Ser15. Thr13 provides a ligand contact to sn-glycerol 3-phosphate. Arg17 lines the ADP pocket. Sn-glycerol 3-phosphate-binding residues include Arg83, Glu84, Tyr135, and Asp245. Residues Arg83, Glu84, Tyr135, Asp245, and Gln246 each contribute to the glycerol site. Residues Thr267 and Gly310 each contribute to the ADP site. Thr267, Gly310, Gln314, and Gly411 together coordinate ATP. Residues Gly411 and Asn415 each contribute to the ADP site.

It belongs to the FGGY kinase family. As to quaternary structure, homotetramer and homodimer (in equilibrium).

It catalyses the reaction glycerol + ATP = sn-glycerol 3-phosphate + ADP + H(+). It participates in polyol metabolism; glycerol degradation via glycerol kinase pathway; sn-glycerol 3-phosphate from glycerol: step 1/1. Activated by phosphorylation and inhibited by fructose 1,6-bisphosphate (FBP). Key enzyme in the regulation of glycerol uptake and metabolism. Catalyzes the phosphorylation of glycerol to yield sn-glycerol 3-phosphate. This is Glycerol kinase from Lactobacillus delbrueckii subsp. bulgaricus (strain ATCC BAA-365 / Lb-18).